The following is a 254-amino-acid chain: 5-oxoprolinase subunit A (254 aa).

This sequence belongs to the LamB/PxpA family. As to quaternary structure, forms a complex composed of PxpA, PxpB and PxpC.

The catalysed reaction is 5-oxo-L-proline + ATP + 2 H2O = L-glutamate + ADP + phosphate + H(+). Functionally, catalyzes the cleavage of 5-oxoproline to form L-glutamate coupled to the hydrolysis of ATP to ADP and inorganic phosphate. This chain is 5-oxoprolinase subunit A, found in Brevibacillus brevis (strain 47 / JCM 6285 / NBRC 100599).